Consider the following 488-residue polypeptide: Germacrene A hydroxylase (488 aa).

Topologically, residues 1–6 are cytoplasmic; the sequence is MEVSLT. The helical; Signal-anchor for type II membrane protein transmembrane segment at 7–23 threads the bilayer; that stretch reads TSIALATIVFFLYKLLT. Over 24–488 the chain is Lumenal; it reads RPTSSKNRLP…KTELMLVPSF (465 aa). N-linked (GlcNAc...) asparagine glycosylation is found at Asn-169, Asn-260, Asn-379, and Asn-412. Position 432 (Cys-432) interacts with heme.

It belongs to the cytochrome P450 family. The cofactor is heme. In terms of tissue distribution, expressed in leaf primordia.

Its subcellular location is the endoplasmic reticulum membrane. The catalysed reaction is (+)-(R)-germacrene A + 3 reduced [NADPH--hemoprotein reductase] + 3 O2 = germacra-1(10),4,11(13)-trien-12-oate + 3 oxidized [NADPH--hemoprotein reductase] + 4 H2O + 4 H(+). The protein operates within secondary metabolite biosynthesis; terpenoid biosynthesis. Its function is as follows. Involved in the biosynthesis of germacrene-derived sesquiterpene lactones. Catalyzes three consecutive oxidations of germacrene A to produce germacrene A acid. Could also catalyze the three-step oxidation of non-natural substrate amorphadiene to artemisinic acid. This chain is Germacrene A hydroxylase, found in Helianthus annuus (Common sunflower).